Here is a 387-residue protein sequence, read N- to C-terminus: 4-hydroxy-3-methylbut-2-en-1-yl diphosphate synthase (flavodoxin) (387 aa).

Cysteine 280, cysteine 283, cysteine 315, and glutamate 322 together coordinate [4Fe-4S] cluster.

Belongs to the IspG family. It depends on [4Fe-4S] cluster as a cofactor.

It catalyses the reaction (2E)-4-hydroxy-3-methylbut-2-enyl diphosphate + oxidized [flavodoxin] + H2O + 2 H(+) = 2-C-methyl-D-erythritol 2,4-cyclic diphosphate + reduced [flavodoxin]. It participates in isoprenoid biosynthesis; isopentenyl diphosphate biosynthesis via DXP pathway; isopentenyl diphosphate from 1-deoxy-D-xylulose 5-phosphate: step 5/6. Its function is as follows. Converts 2C-methyl-D-erythritol 2,4-cyclodiphosphate (ME-2,4cPP) into 1-hydroxy-2-methyl-2-(E)-butenyl 4-diphosphate. The sequence is that of 4-hydroxy-3-methylbut-2-en-1-yl diphosphate synthase (flavodoxin) from Mycobacterium bovis (strain BCG / Pasteur 1173P2).